Consider the following 301-residue polypeptide: Glutamine amidotransferase-like protein GlxB (301 aa).

Residue Cys2 is part of the active site. A Glutamine amidotransferase type-2 domain is found at 2–298 (CGIVGLFLKD…PATVYFWDHQ (297 aa)).

This is Glutamine amidotransferase-like protein GlxB (glxB) from Rhizobium meliloti (strain 1021) (Ensifer meliloti).